Reading from the N-terminus, the 341-residue chain is 4-hydroxy-2-oxovalerate aldolase (341 aa).

The Pyruvate carboxyltransferase domain occupies 9–259 (VRITEVCLRD…KLDIDLYKMM (251 aa)). 17-18 (RD) contributes to the substrate binding site. A Mn(2+)-binding site is contributed by Asp18. His21 (proton acceptor) is an active-site residue. Substrate contacts are provided by Ser171 and His198. Mn(2+) is bound by residues His198 and His200. Tyr289 contacts substrate.

This sequence belongs to the 4-hydroxy-2-oxovalerate aldolase family.

It carries out the reaction (S)-4-hydroxy-2-oxopentanoate = acetaldehyde + pyruvate. This is 4-hydroxy-2-oxovalerate aldolase from Bacillus cereus (strain ATCC 10987 / NRS 248).